Reading from the N-terminus, the 299-residue chain is MTDGSAMTLRDEARAKVNLTLRVVGRRPDGYHELESVVAFADCADHLTLQPGAALSLTTIGPGAQDCGDSADNLVLKAARLLGERVPDLTTGAFTLDKHLPVAAGIGGGSADAAAALRLLARANDLAVDDPRLIEAARLTGADVPVCLPSKPCVMTGVGEKLSPLPLPRIPAVMVNPRVPVATKDVFTALGLKPGSLAVGATDVLAAPAWPEAGAPLADWVVALEAGTNDLEPPALKVEPVVGTVLEALRATAGVQLARMSGSGATCFALYADDASARAAADALCAAHPGWWVHAGSLS.

Residue Lys16 is part of the active site. 101-111 contributes to the ATP binding site; sequence PVAAGIGGGSA. Asp143 is a catalytic residue.

It belongs to the GHMP kinase family. IspE subfamily.

It catalyses the reaction 4-CDP-2-C-methyl-D-erythritol + ATP = 4-CDP-2-C-methyl-D-erythritol 2-phosphate + ADP + H(+). The protein operates within isoprenoid biosynthesis; isopentenyl diphosphate biosynthesis via DXP pathway; isopentenyl diphosphate from 1-deoxy-D-xylulose 5-phosphate: step 3/6. Catalyzes the phosphorylation of the position 2 hydroxy group of 4-diphosphocytidyl-2C-methyl-D-erythritol. The sequence is that of 4-diphosphocytidyl-2-C-methyl-D-erythritol kinase from Rhodopseudomonas palustris (strain ATCC BAA-98 / CGA009).